Reading from the N-terminus, the 199-residue chain is Protein GrpE (199 aa).

Residues 1-17 (MSDSDNNTKSQQNNPTQ) show a composition bias toward polar residues. A disordered region spans residues 1-36 (MSDSDNNTKSQQNNPTQTDEKSGEEIQSNQKPQRKF).

This sequence belongs to the GrpE family. In terms of assembly, homodimer.

It is found in the cytoplasm. Participates actively in the response to hyperosmotic and heat shock by preventing the aggregation of stress-denatured proteins, in association with DnaK and GrpE. It is the nucleotide exchange factor for DnaK and may function as a thermosensor. Unfolded proteins bind initially to DnaJ; upon interaction with the DnaJ-bound protein, DnaK hydrolyzes its bound ATP, resulting in the formation of a stable complex. GrpE releases ADP from DnaK; ATP binding to DnaK triggers the release of the substrate protein, thus completing the reaction cycle. Several rounds of ATP-dependent interactions between DnaJ, DnaK and GrpE are required for fully efficient folding. The protein is Protein GrpE of Ehrlichia canis (strain Jake).